Here is a 242-residue protein sequence, read N- to C-terminus: DNA repair protein RecO (242 aa).

Belongs to the RecO family. As to quaternary structure, monomer.

In terms of biological role, involved in DNA repair and RecF pathway recombination. The sequence is that of DNA repair protein RecO from Salmonella gallinarum (strain 287/91 / NCTC 13346).